Reading from the N-terminus, the 239-residue chain is Purine nucleoside phosphorylase DeoD-type (239 aa).

H5 is a binding site for a purine D-ribonucleoside. Residues G21, R25, R44, and 88 to 91 each bind phosphate; that span reads RVGS. A purine D-ribonucleoside contacts are provided by residues 180–182 and 204–205; these read EME and SD. The Proton donor role is filled by D205.

It belongs to the PNP/UDP phosphorylase family. Homohexamer; trimer of homodimers.

The enzyme catalyses a purine D-ribonucleoside + phosphate = a purine nucleobase + alpha-D-ribose 1-phosphate. The catalysed reaction is a purine 2'-deoxy-D-ribonucleoside + phosphate = a purine nucleobase + 2-deoxy-alpha-D-ribose 1-phosphate. Its function is as follows. Catalyzes the reversible phosphorolytic breakdown of the N-glycosidic bond in the beta-(deoxy)ribonucleoside molecules, with the formation of the corresponding free purine bases and pentose-1-phosphate. In Salmonella arizonae (strain ATCC BAA-731 / CDC346-86 / RSK2980), this protein is Purine nucleoside phosphorylase DeoD-type.